A 350-amino-acid polypeptide reads, in one-letter code: Phosphoribosylformylglycinamidine cyclo-ligase (350 aa).

The protein belongs to the AIR synthase family.

The protein resides in the cytoplasm. The catalysed reaction is 2-formamido-N(1)-(5-O-phospho-beta-D-ribosyl)acetamidine + ATP = 5-amino-1-(5-phospho-beta-D-ribosyl)imidazole + ADP + phosphate + H(+). Its pathway is purine metabolism; IMP biosynthesis via de novo pathway; 5-amino-1-(5-phospho-D-ribosyl)imidazole from N(2)-formyl-N(1)-(5-phospho-D-ribosyl)glycinamide: step 2/2. This Cupriavidus metallidurans (strain ATCC 43123 / DSM 2839 / NBRC 102507 / CH34) (Ralstonia metallidurans) protein is Phosphoribosylformylglycinamidine cyclo-ligase.